The primary structure comprises 21 residues: Hemolymph 65 kDa lectin BG04 (21 aa).

As to expression, hemolymph.

It localises to the secreted. In terms of biological role, binds and precipitates antigens of the parasite Echinostoma paraensei. This is Hemolymph 65 kDa lectin BG04 (BG04) from Biomphalaria glabrata (Bloodfluke planorb).